A 517-amino-acid chain; its full sequence is Synaptic vesicular amine transporter (517 aa).

The Cytoplasmic portion of the chain corresponds to 1–20 (MALSDLVLLRWLRDSRHSRK). A helical membrane pass occupies residues 21-41 (LILFIVFLALLLDNMLLTVVV). Over 42–132 (PIIPSYLYSI…EDKDLLNENV (91 aa)) the chain is Extracellular. N-linked (GlcNAc...) asparagine glycosylation is found at Asn-56, Asn-83, Asn-84, Asn-91, and Asn-113. Residues 100–119 (ESPKATTTQHTVTNTTVPPD) are disordered. A compositionally biased stretch (low complexity) spans 105–115 (TTTQHTVTNTT). Residues Cys-120 and Cys-327 are joined by a disulfide bond. The helical transmembrane segment at 133-153 (QVGLLFASKATVQLLTNPFIG) threads the bilayer. Residues 154–162 (LLTNRIGYP) lie on the Cytoplasmic side of the membrane. A helical membrane pass occupies residues 163 to 183 (IPMFAGFCIMFISTVMFAFSS). Topologically, residues 184–192 (SYAFLLIAR) are extracellular. Residues 193 to 213 (SLQGIGSSCSSVAGMGMLASV) form a helical membrane-spanning segment. The Cytoplasmic portion of the chain corresponds to 214–222 (YTDDEERGN). The chain crosses the membrane as a helical span at residues 223–245 (AMGIALGGLAMGVLVGPPFGSVL). Positions 231 and 235 each coordinate serotonin. The Extracellular portion of the chain corresponds to 246-251 (YEFVGK). Residues 252–274 (TAPFLVLAALVLLDGAIQLFVLQ) form a helical membrane-spanning segment. At 275–294 (PSRVQPESQKGTPLTTLLKD) the chain is on the cytoplasmic side. Residues 295–314 (PYILIAAGSICFANMGIAML) traverse the membrane as a helical segment. Residues Asn-308, Ile-311, Glu-315, Phe-337, and Tyr-344 each contribute to the serotonin site. Residues 315–331 (EPALPIWMMETMCSRKW) are Extracellular-facing. A helical transmembrane segment spans residues 332 to 355 (QLGVAFLPASISYLIGTNIFGILA). The Cytoplasmic portion of the chain corresponds to 356-360 (HKMGR). Residues 361–381 (WLCALLGMIVVGISILCIPFA) traverse the membrane as a helical segment. The Extracellular segment spans residues 382–392 (KNIYGLIAPNF). Residues 393–413 (GVGFAIGMVDSSMMPIMGYLV) traverse the membrane as a helical segment. Asp-402 contributes to the serotonin binding site. Residues 414–417 (DLRH) are Cytoplasmic-facing. Residues 418-438 (VSVYGSVYAIADVAFCMGYAI) form a helical membrane-spanning segment. Residue Tyr-436 participates in serotonin binding. Over 439 to 443 (GPSAG) the chain is Extracellular. Residues 444-465 (GAIAKAIGFPWLMTIIGIIDIV) form a helical membrane-spanning segment. Over 466 to 517 (FAPLCFFLRSPPAKEEKMAILMDHNCPIKTKMYTQNNVQPYPVGDDEESESD) the chain is Cytoplasmic. 2 positions are modified to phosphoserine; by CK2: Ser-514 and Ser-516.

It belongs to the major facilitator superfamily. Vesicular transporter family. Interacts with SLC6A3. Expressed in striata and substantia nigra.

It is found in the cytoplasmic vesicle. The protein localises to the secretory vesicle. The protein resides in the synaptic vesicle membrane. Its subcellular location is the secretory vesicle membrane. It localises to the cell projection. It is found in the axon. The protein localises to the dendrite. The catalysed reaction is serotonin(in) + 2 H(+)(out) = serotonin(out) + 2 H(+)(in). It carries out the reaction dopamine(in) + 2 H(+)(out) = dopamine(out) + 2 H(+)(in). It catalyses the reaction histamine(in) + 2 H(+)(out) = histamine(out) + 2 H(+)(in). With respect to regulation, strongly inhibited by reserpine and tetrabenazine. Also inhibited to a lesser extent by ketanserin and fenfluramine. Reserpine and ketanserin inhibit by blocking the substrate-binding pocket. Tetrabenazine traps SLC18A2/VMAT2 in an occluded conformation and its inhibition is specific to SLC18A2/VMAT2 but not SLC18A1/VMAT1. Electrogenic antiporter that exchanges one cationic monoamine with two intravesicular protons across the membrane of secretory and synaptic vesicles. Uses the electrochemical proton gradient established by the V-type proton-pump ATPase to accumulate high concentrations of monoamines inside the vesicles prior to their release via exocytosis. Transports a variety of catecholamines such as dopamine, adrenaline and noradrenaline, histamine, and indolamines such as serotonin. Regulates the transvesicular monoaminergic gradient that determines the quantal size. Mediates somatodendritic dopamine release in hippocampal neurons, likely as part of a regulated secretory pathway that integrates retrograde synaptic signals. Acts as a primary transporter for striatal dopamine loading ensuring impulse-dependent release of dopamine at the synaptic cleft. Responsible for histamine and serotonin storage and subsequent corelease from mast cell granules. The sequence is that of Synaptic vesicular amine transporter (Slc18a2) from Mus musculus (Mouse).